A 354-amino-acid polypeptide reads, in one-letter code: Serum paraoxonase/lactonase 3 (354 aa).

Residues Cys-42 and Cys-352 are joined by a disulfide bond. Asn-50 carries N-linked (GlcNAc...) asparagine glycosylation. Residues Glu-53 and Asp-54 each coordinate Ca(2+). Residue His-114 is the Proton acceptor of the active site. Residue Ile-116 coordinates Ca(2+). Position 165 is a phosphoserine (Ser-165). Ca(2+) is bound by residues Asn-167, Asp-168, Asn-223, Asp-268, and Asn-269. N-linked (GlcNAc...) asparagine glycosylation is found at Asn-269 and Asn-323.

It belongs to the paraoxonase family. As to quaternary structure, homodimer. Requires Ca(2+) as cofactor. Glycosylated. Post-translationally, the signal sequence is not cleaved.

The protein resides in the secreted. The protein localises to the extracellular space. It catalyses the reaction a phenyl acetate + H2O = a phenol + acetate + H(+). The enzyme catalyses An aryl dialkyl phosphate + H2O = dialkyl phosphate + an aryl alcohol.. The catalysed reaction is an N-acyl-L-homoserine lactone + H2O = an N-acyl-L-homoserine + H(+). In terms of biological role, has low activity towards the organophosphate paraxon and aromatic carboxylic acid esters. Rapidly hydrolyzes lactones such as statin prodrugs (e.g. lovastatin). Hydrolyzes aromatic lactones and 5- or 6-member ring lactones with aliphatic substituents but not simple lactones or those with polar substituents. The protein is Serum paraoxonase/lactonase 3 (Pon3) of Mus musculus (Mouse).